An 85-amino-acid chain; its full sequence is Coiled-coil-helix-coiled-coil-helix domain-containing protein 7 (85 aa).

A CHCH domain is found at 13–55 (SNPCLEETDASTKCMDDNRYEKDLCTPYFVKYKNCRKFWNGIM). 2 consecutive short sequence motifs (cx9C motif) follow at residues 16-26 (CLEETDASTKC) and 37-47 (CTPYFVKYKNC). Intrachain disulfides connect C16-C47 and C26-C37.

This sequence belongs to the CHCHD7 family.

Its subcellular location is the mitochondrion intermembrane space. This Xenopus tropicalis (Western clawed frog) protein is Coiled-coil-helix-coiled-coil-helix domain-containing protein 7 (chchd7).